The primary structure comprises 806 residues: Zygotic DNA replication licensing factor mcm3 (806 aa).

The 208-residue stretch at 295–502 (VFEQLSRSLA…HDREISDHVL (208 aa)) folds into the MCM domain. 345 to 352 (GDPSVAKS) lines the ATP pocket. Positions 477–480 (SRFD) match the Arginine finger motif. The interval 662-738 (KKRRRREGES…TDSSAKPGLS (77 aa)) is disordered. Residues 693 to 702 (AQDGESHDPY) show a composition bias toward basic and acidic residues.

This sequence belongs to the MCM family. In terms of assembly, component of the mcm2-7 complex (RLF-M). The complex forms a toroidal hexameric ring with the proposed subunit order mcm2-mcm6-mcm4-mcm7-mcm3-mcm5. Begins to associate with zmcm6 into mcm complexes at the neurula stage. Component of the CMG helicase complex, composed of the mcm2-7 complex, the GINS complex and cdc45.

The protein resides in the nucleus. Its subcellular location is the chromosome. It catalyses the reaction ATP + H2O = ADP + phosphate + H(+). Acts as a component of the mcm2-7 complex (mcm complex) which is the putative replicative helicase essential for 'once per cell cycle' DNA replication initiation and elongation in eukaryotic cells. The active ATPase sites in the mcm2-7 ring are formed through the interaction surfaces of two neighboring subunits such that a critical structure of a conserved arginine finger motif is provided in trans relative to the ATP-binding site of the Walker A box of the adjacent subunit. The six ATPase active sites, however, are likely to contribute differentially to the complex helicase activity. The existence of maternal and zygotic forms of mcm3 and mcm6 suggests that specific forms of mcm2-7 complexes may be used during different stages of development. This is Zygotic DNA replication licensing factor mcm3 from Xenopus laevis (African clawed frog).